An 800-amino-acid polypeptide reads, in one-letter code: Kolavenyl diphosphate synthase TPS5, chloroplastic (800 aa).

A chloroplast-targeting transit peptide spans 1 to 75; sequence MSLAYSQATS…VILTAEKSVD (75 aa). Lysine 244 contacts substrate. Mg(2+) contacts are provided by aspartate 375 and aspartate 377. Residues 375 to 378 carry the DXDD motif motif; it reads DVDD. Lysine 461 is a substrate binding site.

Belongs to the terpene synthase family. The cofactor is Mg(2+). As to expression, mostly expressed in trichomes of leaves and fruits.

The protein localises to the plastid. It is found in the chloroplast. The enzyme catalyses (2E,6E,10E)-geranylgeranyl diphosphate = (+)-kolavenyl diphosphate. Its pathway is secondary metabolite biosynthesis; terpenoid biosynthesis. In terms of biological role, involved in the biosynthesis of labdane-type diterpenoid including cleroda-dienols, and peregrinol lactones and furan derivatives, dopaminergic diterpenoids that can bind to dopamine receptors in the human pituitary gland, have probably ability to lower prolactin levels, and are used to treat menstrual cycle disorders (e.g. premenstrual syndrome and mastodynia). Terpene synthase that produces kolavenyl diphosphate from geranylgeranyl diphosphate (GGPP). The protein is Kolavenyl diphosphate synthase TPS5, chloroplastic of Vitex agnus-castus (Chaste tree).